Consider the following 127-residue polypeptide: Aspartate 1-decarboxylase (127 aa).

Ser-25 (schiff-base intermediate with substrate; via pyruvic acid) is an active-site residue. Residue Ser-25 is modified to Pyruvic acid (Ser). Substrate is bound at residue Thr-57. The active-site Proton donor is Tyr-58. 73–75 (GAA) lines the substrate pocket.

It belongs to the PanD family. As to quaternary structure, heterooctamer of four alpha and four beta subunits. It depends on pyruvate as a cofactor. In terms of processing, is synthesized initially as an inactive proenzyme, which is activated by self-cleavage at a specific serine bond to produce a beta-subunit with a hydroxyl group at its C-terminus and an alpha-subunit with a pyruvoyl group at its N-terminus.

Its subcellular location is the cytoplasm. The catalysed reaction is L-aspartate + H(+) = beta-alanine + CO2. Its pathway is cofactor biosynthesis; (R)-pantothenate biosynthesis; beta-alanine from L-aspartate: step 1/1. Catalyzes the pyruvoyl-dependent decarboxylation of aspartate to produce beta-alanine. The chain is Aspartate 1-decarboxylase from Listeria monocytogenes serotype 4b (strain CLIP80459).